We begin with the raw amino-acid sequence, 197 residues long: CASP-like protein 1B2 (197 aa).

Alanine 2 is subject to N-acetylalanine. The Cytoplasmic portion of the chain corresponds to 2-17 (AREKIVVAGGSTKSWK). The chain crosses the membrane as a helical span at residues 18–38 (LLLGLRVFAFMATLAAAIVMS). Topologically, residues 39 to 69 (LNKETKTLVVATIGTLPIKATLTAKFQDTPA) are extracellular. Residues 70 to 90 (FVFFVIANVMVSFHNLLMIVL) traverse the membrane as a helical segment. Over 91–106 (QIFSRKLEYKGVRLLS) the chain is Cytoplasmic. Residues 107-127 (IAILDMLNATLVSAAANAAVF) form a helical membrane-spanning segment. At 128-156 (VAELGKNGNKHAKWNKVCDRFATYCDHGA) the chain is on the extracellular side. Residues 157-177 (GALIAAFAGVILMLLVSSVSI) traverse the membrane as a helical segment. Residues 178–197 (SRLLINSKHLSTTATTTAVV) are Cytoplasmic-facing.

Belongs to the Casparian strip membrane proteins (CASP) family. As to quaternary structure, homodimer and heterodimers.

It is found in the cell membrane. The sequence is that of CASP-like protein 1B2 from Arabidopsis lyrata subsp. lyrata (Lyre-leaved rock-cress).